Consider the following 298-residue polypeptide: Small ribosomal subunit protein uS2 (298 aa).

The interval 272–298 (EGGDWAASSAAPAGESWAEAQPTEAKW) is disordered.

It belongs to the universal ribosomal protein uS2 family. Component of the small ribosomal subunit. Mature ribosomes consist of a small (40S) and a large (60S) subunit. The 40S subunit contains about 33 different proteins and 1 molecule of RNA (18S). The 60S subunit contains about 49 different proteins and 3 molecules of RNA (25S, 5.8S and 5S). Interacts with rps21.

Its subcellular location is the cytoplasm. In terms of biological role, required for the assembly and/or stability of the 40S ribosomal subunit. Required for the processing of the 20S rRNA-precursor to mature 18S rRNA in a late step of the maturation of 40S ribosomal subunits. The sequence is that of Small ribosomal subunit protein uS2 (rps0) from Aspergillus niger (strain ATCC MYA-4892 / CBS 513.88 / FGSC A1513).